A 92-amino-acid chain; its full sequence is Small ribosomal subunit protein uS19c (92 aa).

Belongs to the universal ribosomal protein uS19 family.

The protein localises to the plastid. The protein resides in the chloroplast. Its function is as follows. Protein S19 forms a complex with S13 that binds strongly to the 16S ribosomal RNA. This Nandina domestica (Heavenly bamboo) protein is Small ribosomal subunit protein uS19c.